The sequence spans 349 residues: tRNA pseudouridine synthase D (349 aa).

Substrate is bound at residue Phe-27. Asp-80 functions as the Nucleophile in the catalytic mechanism. Substrate is bound at residue Asn-129. The region spanning 155 to 303 (GVPNYFGAQR…VEASRRAMLL (149 aa)) is the TRUD domain. Phe-329 is a binding site for substrate.

This sequence belongs to the pseudouridine synthase TruD family.

The enzyme catalyses uridine(13) in tRNA = pseudouridine(13) in tRNA. In terms of biological role, responsible for synthesis of pseudouridine from uracil-13 in transfer RNAs. The polypeptide is tRNA pseudouridine synthase D (Salmonella choleraesuis (strain SC-B67)).